Consider the following 366-residue polypeptide: tRNA/tmRNA (uracil-C(5))-methyltransferase (366 aa).

S-adenosyl-L-methionine-binding residues include Q190, Y218, N223, E239, and D299. The Nucleophile role is filled by C324. Catalysis depends on E358, which acts as the Proton acceptor.

This sequence belongs to the class I-like SAM-binding methyltransferase superfamily. RNA M5U methyltransferase family. TrmA subfamily.

It catalyses the reaction uridine(54) in tRNA + S-adenosyl-L-methionine = 5-methyluridine(54) in tRNA + S-adenosyl-L-homocysteine + H(+). The catalysed reaction is uridine(341) in tmRNA + S-adenosyl-L-methionine = 5-methyluridine(341) in tmRNA + S-adenosyl-L-homocysteine + H(+). In terms of biological role, dual-specificity methyltransferase that catalyzes the formation of 5-methyluridine at position 54 (m5U54) in all tRNAs, and that of position 341 (m5U341) in tmRNA (transfer-mRNA). This chain is tRNA/tmRNA (uracil-C(5))-methyltransferase, found in Cronobacter sakazakii (strain ATCC BAA-894) (Enterobacter sakazakii).